The following is a 129-amino-acid chain: Acetophenone carboxylase beta subunit (129 aa).

Acetophenone carboxylase consists of five subunits; a heterooctameric subcomplex of two alpha (Apc1), two beta (Apc2), two gamma (Apc3) and two delta (Apc4) subunits assembles with the epsilon (Apc5) subunit in an unknown stoichiometry. It depends on Mg(2+) as a cofactor. Mn(2+) serves as cofactor.

Its subcellular location is the cytoplasm. The enzyme catalyses acetophenone + hydrogencarbonate + 2 ATP + H2O = 3-oxo-3-phenylpropanoate + 2 ADP + 2 phosphate + 2 H(+). With respect to regulation, inhibited by zinc ions, carbamoylphosphate and beta,gamma-imido-ATP. In terms of biological role, catalyzes the carboxylation of acetophenone to form 3-oxo-3-phenylpropanoate (benzoylacetate) in the anaerobic catabolism of ethylbenzene. Also carboxylates propiophenone at the same rate and 4-acetyl-pyridine at lower rates. The chain is Acetophenone carboxylase beta subunit (apc2) from Aromatoleum aromaticum (strain DSM 19018 / LMG 30748 / EbN1) (Azoarcus sp. (strain EbN1)).